Reading from the N-terminus, the 201-residue chain is Recombination protein RecR (201 aa).

A C4-type zinc finger spans residues 60–75 (CSCCGNVDTIDPCTVC). The region spanning 83–178 (AVIIVVEDVA…RITRLAHGVP (96 aa)) is the Toprim domain.

Belongs to the RecR family.

May play a role in DNA repair. It seems to be involved in an RecBC-independent recombinational process of DNA repair. It may act with RecF and RecO. In Rhizobium meliloti (strain 1021) (Ensifer meliloti), this protein is Recombination protein RecR.